The following is a 377-amino-acid chain: 8-amino-7-oxononanoate synthase (377 aa).

Residue Arg-13 coordinates substrate. 100 to 101 (GY) provides a ligand contact to pyridoxal 5'-phosphate. His-125 contributes to the substrate binding site. Pyridoxal 5'-phosphate-binding residues include Ser-171, His-199, and Thr-228. Lys-231 carries the N6-(pyridoxal phosphate)lysine modification. Thr-345 is a binding site for substrate.

It belongs to the class-II pyridoxal-phosphate-dependent aminotransferase family. BioF subfamily. In terms of assembly, homodimer. The cofactor is pyridoxal 5'-phosphate.

The enzyme catalyses 6-carboxyhexanoyl-[ACP] + L-alanine + H(+) = (8S)-8-amino-7-oxononanoate + holo-[ACP] + CO2. The protein operates within cofactor biosynthesis; biotin biosynthesis. Functionally, catalyzes the decarboxylative condensation of pimeloyl-[acyl-carrier protein] and L-alanine to produce 8-amino-7-oxononanoate (AON), [acyl-carrier protein], and carbon dioxide. This Nitrosococcus oceani (strain ATCC 19707 / BCRC 17464 / JCM 30415 / NCIMB 11848 / C-107) protein is 8-amino-7-oxononanoate synthase.